The primary structure comprises 1294 residues: Disease resistance protein L6 (1294 aa).

The first 29 residues, 1-29 (MSYLREVATAVALLLPFILLNKFWRPNSK), serve as a signal peptide directing secretion. The segment at 34–54 (NDDDDSTSEVDAISDSTNPSG) is disordered. The region spanning 59-221 (VEYEVFLSFR…AIADKVSADI (163 aa)) is the TIR domain. NAD(+) contacts are provided by residues 68–73 (RGPDTR) and glycine 101. Glutamate 135 is a catalytic residue. The 240-residue stretch at 241–480 (DDHITAVLEK…VYDRLKISYD (240 aa)) folds into the NB-ARC domain. LRR repeat units follow at residues 246–268 (AVLE…GMGG), 468–492 (LDEV…IFLD), 604–625 (LSEL…NNLL), 626–650 (PNLK…NYTM), 904–928 (LENL…GLQG), 1012–1039 (FPML…SLEE), 1063–1085 (LQKL…LEEL), 1086–1109 (KSLQ…KLKE), 1179–1203 (LEEL…SFLS), 1205–1229 (LQKL…ELKS), and 1254–1278 (LKNL…ALKT).

This sequence belongs to the disease resistance TIR-NB-LRR family. As to quaternary structure, homooligomer; homooligomerization is required for activity.

The enzyme catalyses NAD(+) + H2O = ADP-D-ribose + nicotinamide + H(+). The catalysed reaction is NADP(+) + H2O = ADP-D-ribose 2'-phosphate + nicotinamide + H(+). It catalyses the reaction NAD(+) = 2'cADPR + nicotinamide + H(+). In terms of biological role, TIR-NB-LRR receptor-like protein that confers resistance to the flax rust phytopathogenic fungus (M.lini). An NAD(+) hydrolase (NADase): in response to activation, catalyzes cleavage of NAD(+) into ADP-D-ribose (ADPR) and nicotinamide; NAD(+) cleavage triggering a defense system that promotes cell death. Also able to hydrolyze NADP(+), but not other NAD(+)-related molecules. Makes small amounts of 2' cyclic ADPR (2'cADPR). The protein is Disease resistance protein L6 of Linum usitatissimum (Flax).